Reading from the N-terminus, the 391-residue chain is Large ribosomal subunit protein uL3 (391 aa).

Basic and acidic residues predominate over residues 1 to 10; the sequence is MSHRKFEAPR. Residues 1–41 form a disordered region; the sequence is MSHRKFEAPRHGSLGFRPRRRTRHHRGRCRSFPKDDPSKKP. Basic residues predominate over residues 17–31; it reads RPRRRTRHHRGRCRS.

Belongs to the universal ribosomal protein uL3 family.

It is found in the cytoplasm. The L3 protein is a component of the large subunit of cytoplasmic ribosomes. The chain is Large ribosomal subunit protein uL3 (RPL3) from Tetrahymena thermophila.